Reading from the N-terminus, the 100-residue chain is Large ribosomal subunit protein bL21 (100 aa).

Belongs to the bacterial ribosomal protein bL21 family. Part of the 50S ribosomal subunit. Contacts protein L20.

Functionally, this protein binds to 23S rRNA in the presence of protein L20. The protein is Large ribosomal subunit protein bL21 of Deinococcus deserti (strain DSM 17065 / CIP 109153 / LMG 22923 / VCD115).